Reading from the N-terminus, the 338-residue chain is Lipoate-protein ligase A (338 aa).

The BPL/LPL catalytic domain maps to 29 to 216 (PATQRVLFLW…AFFAHYGERV (188 aa)). ATP contacts are provided by residues Arg71, 76–79 (GAVF), and Lys134. Position 134 (Lys134) interacts with (R)-lipoate.

This sequence belongs to the LplA family. As to quaternary structure, monomer.

The protein localises to the cytoplasm. It carries out the reaction L-lysyl-[lipoyl-carrier protein] + (R)-lipoate + ATP = N(6)-[(R)-lipoyl]-L-lysyl-[lipoyl-carrier protein] + AMP + diphosphate + H(+). It participates in protein modification; protein lipoylation via exogenous pathway; protein N(6)-(lipoyl)lysine from lipoate: step 1/2. Its pathway is protein modification; protein lipoylation via exogenous pathway; protein N(6)-(lipoyl)lysine from lipoate: step 2/2. In terms of biological role, catalyzes both the ATP-dependent activation of exogenously supplied lipoate to lipoyl-AMP and the transfer of the activated lipoyl onto the lipoyl domains of lipoate-dependent enzymes. This chain is Lipoate-protein ligase A, found in Escherichia coli (strain K12 / MC4100 / BW2952).